We begin with the raw amino-acid sequence, 76 residues long: Heat shock factor-binding protein 1 (76 aa).

It belongs to the HSBP1 family. Homohexamer. Associates with heptad repeats of HSF1 trimers and probably also HSF1 monomers, and with HSP70. Association with HSF1 trimers and HSP70 coincides with attenuation of heat shock response and the conversion of HSF1 trimer to monomer.

The protein resides in the nucleus. Its function is as follows. Negative regulator of the heat shock response. Negatively affects HSF1 DNA-binding activity. May have a role in the suppression of the activation of the stress response during the aging process. In Homo sapiens (Human), this protein is Heat shock factor-binding protein 1 (HSBP1).